A 306-amino-acid polypeptide reads, in one-letter code: uncharacterized protein (306 aa).

A run of 9 helical transmembrane segments spans residues 13–33 (VLLS…FAFI), 53–73 (PLPM…FAWG), 86–106 (ITGL…IWAA), 112–132 (VGLT…IVPL), 147–167 (WGMM…GMLF), 177–197 (AFVS…VIAI), 214–234 (AGIA…AWLI), 246–268 (VSLI…VTFF), and 272–294 (VAVP…GYML).

The protein resides in the cell membrane. This is an uncharacterized protein from Bacillus subtilis (strain 168).